Here is a 37-residue protein sequence, read N- to C-terminus: Large ribosomal subunit protein bL36c (37 aa).

This sequence belongs to the bacterial ribosomal protein bL36 family.

It is found in the plastid. Its subcellular location is the chloroplast. The polypeptide is Large ribosomal subunit protein bL36c (Thalassiosira pseudonana (Marine diatom)).